Reading from the N-terminus, the 124-residue chain is Large ribosomal subunit protein bL12 (124 aa).

It belongs to the bacterial ribosomal protein bL12 family. In terms of assembly, homodimer. Part of the ribosomal stalk of the 50S ribosomal subunit. Forms a multimeric L10(L12)X complex, where L10 forms an elongated spine to which 2 to 4 L12 dimers bind in a sequential fashion. Binds GTP-bound translation factors.

Functionally, forms part of the ribosomal stalk which helps the ribosome interact with GTP-bound translation factors. Is thus essential for accurate translation. This is Large ribosomal subunit protein bL12 from Burkholderia lata (strain ATCC 17760 / DSM 23089 / LMG 22485 / NCIMB 9086 / R18194 / 383).